We begin with the raw amino-acid sequence, 854 residues long: Espin (854 aa).

ANK repeat units lie at residues 1-31, 35-64, 69-99, 103-133, 137-167, 171-201, 205-235, 239-268, and 271-300; these read MALEQALQAARQGELDVLRSLHAAGLLGPSL, LDALPVHHAARAGKLHCLRFLVEEAALPAA, NGATPAHDASATGHLACLQWLLSQGGCRVQD, SGATVLHLAARFGHPEVVNWLLHHGGGDPTA, MGALPIHYAAAKGDFPSLRLLVEHYPEGVNA, NGATPLYLACQEGHLEVTQYLVQECGADPHA, DGMTPLHAAAQMGHSPVIVWLVSCTDVSLSE, DGATAMHFAASRGHTKVLSWLLLHGGEISA, and WGGTPLHDAAENGELECCQILVVNGAELDV. Phosphoserine occurs at positions 338 and 342. Basic and acidic residues predominate over residues 338 to 349; the sequence is SRDPSAELEAKQ. Disordered regions lie at residues 338-400, 415-474, 487-713, 765-788, and 800-832; these read SRDP…CGLS, NPEL…MQTK, KELS…AGFQ, KMQEEEEQRRKEEEEEARLASMPA, and EEREQKRKEEERQKQEELRREKEQSEKLRTLGY. The segment covering 352–377 has biased composition (polar residues); that stretch reads SGMSSPNTTVSVQPLNFDLSSPTSTL. A compositionally biased stretch (low complexity) spans 378–389; it reads SNYDSCSSSHSS. Positions 428–463 are enriched in pro residues; sequence PTPPPPPPSFPPPPPPPGTQLPPPPPGYPAPKPPVG. Basic and acidic residues predominate over residues 487–505; it reads KELSSCDGHDGLRRQDSSR. S515 is subject to Phosphoserine. The span at 595 to 620 shows a compositional bias: pro residues; the sequence is LPPPPPPPPPPLPEAASSPPPAPPLP. Residues 633–642 show a composition bias toward low complexity; it reads SSSSTGSTKS. 2 stretches are compositionally biased toward polar residues: residues 643-652 and 667-678; these read FNMMSPTGDN and PTPQSKGLTTVF. S647 bears the Phosphoserine mark. The WH2 domain occupies 651 to 668; that stretch reads DNSELLAEIKAGKSLKPT. Residues S690 and S696 each carry the phosphoserine modification. Residues 692 to 703 show a composition bias toward low complexity; it reads LPSVSPALSPVR. The stretch at 756-830 forms a coiled coil; the sequence is QVMVRKMQLK…KEQSEKLRTL (75 aa).

As to quaternary structure, monomer. Binds F-actin in a Ca(2+)-resistant fashion. Interacts (via N-terminus) with BAIAP2 (via SH3-domain). Interacts with PFN2. Interacts with MYO3A (via C-terminus). Interacts with MYO3B (via C-terminus).

The protein resides in the cytoplasm. It is found in the cytoskeleton. The protein localises to the cell projection. It localises to the stereocilium. Its subcellular location is the microvillus. In terms of biological role, multifunctional actin-bundling protein. Plays a major role in regulating the organization, dimension, dynamics and signaling capacities of the actin filament-rich microvilli in the mechanosensory and chemosensory cells. Required for the assembly and stabilization of the stereociliary parallel actin bundles. Plays a crucial role in the formation and maintenance of inner ear hair cell stereocilia. Involved in the elongation of actin in stereocilia. In extrastriolar hair cells, required for targeting MYO3B to stereocilia tips, and for regulation of stereocilia diameter and staircase formation. The sequence is that of Espin (ESPN) from Homo sapiens (Human).